We begin with the raw amino-acid sequence, 244 residues long: 5'-nucleotidase SurE (244 aa).

Residues Asp-8, Asp-9, Ser-39, and Asn-96 each contribute to the a divalent metal cation site.

It belongs to the SurE nucleotidase family. A divalent metal cation serves as cofactor.

It localises to the cytoplasm. The catalysed reaction is a ribonucleoside 5'-phosphate + H2O = a ribonucleoside + phosphate. Functionally, nucleotidase that shows phosphatase activity on nucleoside 5'-monophosphates. This Thermus thermophilus (strain ATCC 27634 / DSM 579 / HB8) protein is 5'-nucleotidase SurE.